A 410-amino-acid polypeptide reads, in one-letter code: Argininosuccinate synthase (410 aa).

ATP is bound at residue 10–18; that stretch reads AYSGGLDTS. 2 residues coordinate L-citrulline: Tyr88 and Ser93. Residue Gly118 coordinates ATP. Positions 120, 124, and 125 each coordinate L-aspartate. Asn124 is an L-citrulline binding site. L-citrulline-binding residues include Arg128, Ser177, Ser186, Glu262, and Tyr274.

It belongs to the argininosuccinate synthase family. Type 1 subfamily. As to quaternary structure, homotetramer.

It localises to the cytoplasm. The catalysed reaction is L-citrulline + L-aspartate + ATP = 2-(N(omega)-L-arginino)succinate + AMP + diphosphate + H(+). The protein operates within amino-acid biosynthesis; L-arginine biosynthesis; L-arginine from L-ornithine and carbamoyl phosphate: step 2/3. This is Argininosuccinate synthase from Caldanaerobacter subterraneus subsp. tengcongensis (strain DSM 15242 / JCM 11007 / NBRC 100824 / MB4) (Thermoanaerobacter tengcongensis).